The following is a 246-amino-acid chain: Octanoyltransferase (246 aa).

Positions 46–234 (GTAGEMVWLV…AFEEVFGAAE (189 aa)) constitute a BPL/LPL catalytic domain. Substrate is bound by residues 85-92 (RGGEYTYH), 165-167 (AIG), and 178-180 (GIA). Cys-196 functions as the Acyl-thioester intermediate in the catalytic mechanism.

Belongs to the LipB family.

The protein resides in the cytoplasm. The catalysed reaction is octanoyl-[ACP] + L-lysyl-[protein] = N(6)-octanoyl-L-lysyl-[protein] + holo-[ACP] + H(+). It participates in protein modification; protein lipoylation via endogenous pathway; protein N(6)-(lipoyl)lysine from octanoyl-[acyl-carrier-protein]: step 1/2. Its function is as follows. Catalyzes the transfer of endogenously produced octanoic acid from octanoyl-acyl-carrier-protein onto the lipoyl domains of lipoate-dependent enzymes. Lipoyl-ACP can also act as a substrate although octanoyl-ACP is likely to be the physiological substrate. In Chelativorans sp. (strain BNC1), this protein is Octanoyltransferase.